A 273-amino-acid polypeptide reads, in one-letter code: Large ribosomal subunit protein uL2 (273 aa).

Positions 221–263 are disordered; that stretch reads RGTAMNPVDHPHGGGEGRNFGKHPVTPWGVQTKGKKTRHNKRT. The segment covering 253–263 has biased composition (basic residues); the sequence is KGKKTRHNKRT.

It belongs to the universal ribosomal protein uL2 family. In terms of assembly, part of the 50S ribosomal subunit. Forms a bridge to the 30S subunit in the 70S ribosome.

Its function is as follows. One of the primary rRNA binding proteins. Required for association of the 30S and 50S subunits to form the 70S ribosome, for tRNA binding and peptide bond formation. It has been suggested to have peptidyltransferase activity; this is somewhat controversial. Makes several contacts with the 16S rRNA in the 70S ribosome. The chain is Large ribosomal subunit protein uL2 from Actinobacillus succinogenes (strain ATCC 55618 / DSM 22257 / CCUG 43843 / 130Z).